The sequence spans 964 residues: Phosphoenolpyruvate carboxylase (964 aa).

At Ser-11 the chain carries Phosphoserine. Active-site residues include His-172 and Lys-600.

It belongs to the PEPCase type 1 family. Homotetramer. The cofactor is Mg(2+).

Its subcellular location is the cytoplasm. The catalysed reaction is oxaloacetate + phosphate = phosphoenolpyruvate + hydrogencarbonate. The protein operates within photosynthesis; C4 acid pathway. Its activity is regulated as follows. By light-reversible phosphorylation. Through the carboxylation of phosphoenolpyruvate (PEP) it forms oxaloacetate, a four-carbon dicarboxylic acid source for the tricarboxylic acid cycle. The sequence is that of Phosphoenolpyruvate carboxylase (PPC) from Nicotiana tabacum (Common tobacco).